Consider the following 137-residue polypeptide: Basic phospholipase A2 3 (137 aa).

An N-terminal signal peptide occupies residues 1 to 11; it reads LVAVCVSLLGA. A propeptide spanning residues 12-19 is cleaved from the precursor; sequence ANIPPQPL. 7 cysteine pairs are disulfide-bonded: Cys-30–Cys-89, Cys-44–Cys-136, Cys-46–Cys-62, Cys-61–Cys-117, Cys-68–Cys-110, Cys-78–Cys-103, and Cys-96–Cys-108. Ca(2+) contacts are provided by Tyr-45, Gly-47, and Gly-49. Residue His-65 is part of the active site. Residue Asp-66 participates in Ca(2+) binding. The active site involves Asp-111.

This sequence belongs to the phospholipase A2 family. Group I subfamily. D49 sub-subfamily. As to quaternary structure, monomer, or homotrimer. Was firstly described as a trimer, but has been reinterpreted with the possibility of being a monomer. The cofactor is Ca(2+). Expressed by the venom gland.

The protein localises to the secreted. The enzyme catalyses a 1,2-diacyl-sn-glycero-3-phosphocholine + H2O = a 1-acyl-sn-glycero-3-phosphocholine + a fatty acid + H(+). In terms of biological role, snake venom phospholipase A2 (PLA2) that shows anticoagulant and neurotoxic activities. PLA2 catalyzes the calcium-dependent hydrolysis of the 2-acyl groups in 3-sn-phosphoglycerides. The polypeptide is Basic phospholipase A2 3 (Bungarus caeruleus (Indian krait)).